Here is a 548-residue protein sequence, read N- to C-terminus: Chaperonin GroEL 2 (548 aa).

Residues 29–32 (TLGP), 86–90 (DGTTT), Gly-418, 482–484 (NAA), and Asp-498 contribute to the ATP site.

Belongs to the chaperonin (HSP60) family. As to quaternary structure, forms a cylinder of 14 subunits composed of two heptameric rings stacked back-to-back. Interacts with the co-chaperonin GroES.

The protein resides in the cytoplasm. The catalysed reaction is ATP + H2O + a folded polypeptide = ADP + phosphate + an unfolded polypeptide.. Its function is as follows. Together with its co-chaperonin GroES, plays an essential role in assisting protein folding. The GroEL-GroES system forms a nano-cage that allows encapsulation of the non-native substrate proteins and provides a physical environment optimized to promote and accelerate protein folding. This is Chaperonin GroEL 2 from Corynebacterium glutamicum (strain ATCC 13032 / DSM 20300 / JCM 1318 / BCRC 11384 / CCUG 27702 / LMG 3730 / NBRC 12168 / NCIMB 10025 / NRRL B-2784 / 534).